The following is a 443-amino-acid chain: MVNEYDTYNKWLKFFSVRMVQSIIQSRLGDEIESKCVPYSENAVDWFNMRIDELGEISAYLKSNIKSYPPVGTLTLEFLLYTPSGQLLPLEAWILSSSEGTDDCSRNELYHDMSTLLRSAIVSARMTPMHRLYVKKQHLETFVIMYRVFENDISSDMGKGKKTRKIGELVSKFGNISLDLHYRTSMHFEEPEIAPVTPVEDVEEEIDDGEKTVVDENIQTRTVSECVPIADAKKRKASGSVESATSAGSSTSREAAPRFILGQSTSSEDSRHSDVQNSYEEDHKPSLADLRNHSFPFVNLLQSAYNPANGTKKNSSSTCLNSPKSTPEDKEPTIEKVAESFRAAKIDEVVFEEDEDEELPLDSMELSEDSFVHFNQLSDFGGAPSLGNELGDYLKQLKTAPDMTESGDIDICNMDLKTELEKISSQTANFNNFLKHVNSFSDE.

Disordered stretches follow at residues A232–H283 and A308–T333. Over residues S240–R253 the composition is skewed to polar residues. Over residues E268–H283 the composition is skewed to basic and acidic residues. Over residues A308–S325 the composition is skewed to polar residues.

The protein belongs to the ATG13 family. Metazoan subfamily. In terms of assembly, interacts with unc-51 (via C-terminus). Interacts with lgg-1; the interaction is direct.

The protein resides in the cytoplasm. It is found in the cytosol. It localises to the preautophagosomal structure. The protein localises to the perikaryon. Its subcellular location is the cell projection. The protein resides in the axon. Its function is as follows. Component of the unc-51/atg-13 complex required for autophagosome formation. Required for the degradation of germ cell specific P-granule components such as sepa-1 by autophagy in somatic cells. This ensures exclusive localization of the P-granules in germ cells. May function downstream of the let-363 (Tor) signaling pathway to mediate sepa-1 degradation. Plays a role in survival during limited food availability. The sequence is that of Autophagy-related protein 13 homolog from Caenorhabditis elegans.